Reading from the N-terminus, the 182-residue chain is Testis development-related protein (182 aa).

Disordered regions lie at residues 1 to 38, 52 to 73, and 95 to 151; these read MWKLSRSRVLLDEPPEEEDVLRGAPPASAAAPASGASL, DEEHLLETSRSPKSKGTNQRLR, and QPKK…NSAS. A Phosphoserine modification is found at Ser7. Positions 22–37 are enriched in low complexity; sequence RGAPPASAAAPASGAS. The span at 59–70 shows a compositional bias: polar residues; the sequence is TSRSPKSKGTNQ. The segment covering 116–125 has biased composition (basic and acidic residues); sequence VADHTEDDRS.

It belongs to the TDRP family. As to quaternary structure, interacts with PRM2. In terms of tissue distribution, strongly expressed in testis. Also detected at lower levels in epididymis, bone marrow and kidney.

The protein resides in the nucleus. Its subcellular location is the cytoplasm. Its function is as follows. Contributes to normal sperm motility, but not essential for male fertility. In Mus musculus (Mouse), this protein is Testis development-related protein (Tdrp).